The following is a 186-amino-acid chain: Elongation factor P (186 aa).

It belongs to the elongation factor P family.

The protein resides in the cytoplasm. It functions in the pathway protein biosynthesis; polypeptide chain elongation. Its function is as follows. Involved in peptide bond synthesis. Stimulates efficient translation and peptide-bond synthesis on native or reconstituted 70S ribosomes in vitro. Probably functions indirectly by altering the affinity of the ribosome for aminoacyl-tRNA, thus increasing their reactivity as acceptors for peptidyl transferase. This chain is Elongation factor P, found in Prochlorococcus marinus (strain SARG / CCMP1375 / SS120).